The chain runs to 472 residues: Membrane-bound acylglycerophosphatidylinositol O-acyltransferase MBOAT7 (472 aa).

The Cytoplasmic segment spans residues 1-5 (MSPEE). Residues 6–22 (WTYLVVLLISIPIGFLF) form a helical membrane-spanning segment. Residues 23-33 (KKAGPGLKRWG) lie on the Lumenal side of the membrane. A helical membrane pass occupies residues 34–57 (AAAVGLGLTLFTCGPHTLHSLVTI). Topologically, residues 58 to 73 (LGTWALIQAQPCSCHA) are cytoplasmic. Residues 74-93 (LALAWTFSYLLFFRALSLLG) traverse the membrane as a helical segment. At 94–194 (LPTPTPFTNA…VPSLRPLLRR (101 aa)) the chain is on the lumenal side. A helical membrane pass occupies residues 195–212 (AWPAPLFGLLFLLSSHLF). The Cytoplasmic portion of the chain corresponds to 213–231 (PLEAVREDAFYARPLPARL). The chain crosses the membrane as a helical span at residues 232–261 (FYMIPVFFAFRMRFYVAWIAAECGCIAAGF). At 262-426 (GAYPVAAKAR…LSLRDTLRYW (165 aa)) the chain is on the lumenal side. A glycan (N-linked (GlcNAc...) asparagine) is linked at asparagine 321. Residues 427–447 (ASVYFCVHVLALAALGLGLAL) traverse the membrane as a helical segment. Topologically, residues 448 to 472 (GRGGPGRRKSGAPAPSPASGKLREE) are cytoplasmic. The interval 450–472 (GGPGRRKSGAPAPSPASGKLREE) is disordered.

This sequence belongs to the membrane-bound acyltransferase family. In terms of assembly, interacts with SPTSSA; the interaction facilitates MBOAT7 location to mitochondria-associated membranes (MAMs).

The protein resides in the endoplasmic reticulum membrane. The enzyme catalyses a 1-acyl-sn-glycero-3-phospho-(1D-myo-inositol) + an acyl-CoA = a 1,2-diacyl-sn-glycero-3-phospho-(1D-myo-inositol) + CoA. It catalyses the reaction a 1-acyl-sn-glycero-3-phospho-(1D-myo-inositol) + (5Z,8Z,11Z,14Z)-eicosatetraenoyl-CoA = a 1-acyl-2-(5Z,8Z,11Z,14Z-eicosatetraenoyl)-sn-glycero-3-phospho-(1D-myo-inositol) + CoA. It carries out the reaction (5Z,8Z,11Z,14Z)-eicosatetraenoyl-CoA + 1-hexadecanoyl-sn-glycero-3-phosphocholine = 1-hexadecanoyl-2-(5Z,8Z,11Z,14Z-eicosatetraenoyl)-sn-glycero-3-phosphocholine + CoA. The catalysed reaction is 1-octadecanoyl-sn-glycero-3-phospho-(1D-myo-inositol) + (5Z,8Z,11Z,14Z)-eicosatetraenoyl-CoA = 1-octadecanoyl-2-(5Z,8Z,11Z,14Z-eicosatetraenoyl)-sn-glycero-3-phospho-(1D-myo-inositol) + CoA. The protein operates within lipid metabolism; phospholipid metabolism. Its function is as follows. Acyltransferase which catalyzes the transfer of an acyl group from an acyl-CoA to a lysophosphatidylinositol (1-acylglycerophosphatidylinositol or LPI) leading to the production of a phosphatidylinositol (1,2-diacyl-sn-glycero-3-phosphoinositol or PI) and participates in the reacylation step of the phospholipid remodeling pathway also known as the Lands cycle. Prefers arachidonoyl-CoA as the acyl donor, thus contributing to the regulation of free levels arachidonic acid in cell. In liver, participates in the regulation of triglyceride metabolism through the phosphatidylinositol acyl-chain remodeling regulation. The chain is Membrane-bound acylglycerophosphatidylinositol O-acyltransferase MBOAT7 (MBOAT7) from Bos taurus (Bovine).